The following is a 510-amino-acid chain: MFIESFKVESPNVKYTENEINSVYDYETTEVVHENRNGTYQWVVKPKTVKYDFKTDTRVPKLGVMLVGWGGNNGSTLTAGVIANKEGISWATKDKVQQANYFGSLTQASSIRVGSYNGEEIYAPFKSLLPMVNPEDVVFGGWDISDMNLADAMARARVLDIDLQKQLRPYMENMIPLPGIYDPDFIAANQGSRANSVIKGTKKEQVDHIIKDMREFKEKNKVDKLVVLWTANTERYSNVIVGLNDTTENLLASVEKDESEISPSTLYAIACVLEGIPFINGSPQNTFVPGLIELAISKNCLIGGDDFKSGQTKMKSVLVDFLVGAGIKPTSIVSYNHLGNNDGMNLSAPQTFRSKEISKSNVVDDMVASNGILFEPGEHPDHVVVIKYVPYVADSKRAMDEYTSEIFMGGRNTIVLHNTCEDSLLAAPIILDLVLLAELSTRIQFKAEGEGKFHSFHPVATILSYLTKAPLVPPGTPVVNALSKQRAMLENILRACVGLAPENNMIMEYK.

Belongs to the myo-inositol 1-phosphate synthase family. It depends on NAD(+) as a cofactor. Expressed in siliques, leaves, roots, seed endosperm, but not in embryos. Highest expression in seeds. In leaves, only expressed in hydathodes and vascular tissue.

It localises to the cytoplasm. It catalyses the reaction D-glucose 6-phosphate = 1D-myo-inositol 3-phosphate. Its pathway is polyol metabolism; myo-inositol biosynthesis; myo-inositol from D-glucose 6-phosphate: step 1/2. Functionally, key enzyme in myo-inositol biosynthesis pathway that catalyzes the conversion of glucose 6-phosphate to 1-myo-inositol 1-phosphate in a NAD-dependent manner. The sequence is that of Inositol-3-phosphate synthase isozyme 2 (IPS2) from Arabidopsis thaliana (Mouse-ear cress).